The primary structure comprises 850 residues: Protein monoglycylase TTLL8 (850 aa).

2 disordered regions span residues 1 to 29 and 228 to 254; these read MEPE…QGIS and RSSR…DAEN. In terms of domain architecture, TTL spans 222-580; it reads SHQSCSRSSR…DRSCDIGNFE (359 aa). ATP is bound by residues Lys-354, 360 to 361, 392 to 395, 405 to 407, and 449 to 450; these read RG, QKYI, KFD, and CN. Arg-360 lines the a protein pocket. Positions 527, 540, and 542 each coordinate Mg(2+). An ATP-binding site is contributed by Glu-540. A disordered region spans residues 627–652; sequence AQPLKARGPSAMPDPAQGPPSPALQR.

Mg(2+) serves as cofactor.

It is found in the cytoplasm. The protein resides in the cytoskeleton. Its subcellular location is the cell projection. It localises to the cilium. The protein localises to the cilium axoneme. It is found in the flagellum axoneme. It carries out the reaction L-glutamyl-[protein] + glycine + ATP = glycyl-L-glutamyl-[protein] + ADP + phosphate + H(+). Functionally, monoglycylase which modifies both tubulin and non-tubulin proteins, adding a single glycine to the gamma-carboxyl groups of specific glutamate residues to generate monoglycine side chains within the C-terminal tail of target proteins. Not involved in elongation step of the polyglycylation reaction. Preferentially monoglycylates alpha-tubulin over beta-tubulin. Together with TTLL3, mediates microtubule glycylation of primary and motile cilia, which is essential for their stability and maintenance. Together with TTLL3, glycylates sperm flagella which regulates axonemal dynein motor activity, thereby controlling flagellar beat, directional sperm swimming and male fertility. Monoglycylates non-tubulin proteins such as ANP32A, ANP32B, SET, NCL and NAP1. This chain is Protein monoglycylase TTLL8, found in Homo sapiens (Human).